Here is a 337-residue protein sequence, read N- to C-terminus: ATP-dependent 6-phosphofructokinase (337 aa).

Residue glycine 11 participates in ATP binding. 21–25 lines the ADP pocket; the sequence is RAVVR. Residues 72-73 and 102-105 each bind ATP; these read RY and GDGS. Position 103 (aspartate 103) interacts with Mg(2+). Substrate is bound at residue 125 to 127; sequence TID. Residue aspartate 127 is the Proton acceptor of the active site. Arginine 154 lines the ADP pocket. Residues arginine 162 and 169-171 each bind substrate; that span reads MGR. Residues 185–187, lysine 212, and 214–216 each bind ADP; these read GAD and KNH. Residues glutamate 223, arginine 245, and 251-254 each bind substrate; that span reads HILR.

It belongs to the phosphofructokinase type A (PFKA) family. ATP-dependent PFK group I subfamily. Prokaryotic clade 'B1' sub-subfamily. In terms of assembly, homotetramer. The cofactor is Mg(2+).

The protein resides in the cytoplasm. It carries out the reaction beta-D-fructose 6-phosphate + ATP = beta-D-fructose 1,6-bisphosphate + ADP + H(+). The protein operates within carbohydrate degradation; glycolysis; D-glyceraldehyde 3-phosphate and glycerone phosphate from D-glucose: step 3/4. With respect to regulation, allosterically activated by ADP and other diphosphonucleosides, and allosterically inhibited by phosphoenolpyruvate. Catalyzes the phosphorylation of D-fructose 6-phosphate to fructose 1,6-bisphosphate by ATP, the first committing step of glycolysis. The chain is ATP-dependent 6-phosphofructokinase from Streptococcus pyogenes serotype M28 (strain MGAS6180).